Consider the following 873-residue polypeptide: Zinc fingers and homeoboxes protein 1 (873 aa).

A disordered region spans residues 24–63; that stretch reads LISDLDEGPPVLTPVENTRAESISSDEEVHESVDSDNQQN. At threonine 36 the chain carries Phosphothreonine. A phosphoserine mark is found at serine 45, serine 47, and serine 48. C2H2-type zinc fingers lie at residues 70–93 and 102–125; these read YECK…DSEH and YVCV…LKYH. Lysine 159 participates in a covalent cross-link: Glycyl lysine isopeptide (Lys-Gly) (interchain with G-Cter in SUMO2). Residues 198-236 form a disordered region; the sequence is VHHNSVEDVPEEKENEIKPDREETVENPSSSASESNTST. At serine 202 the chain carries Phosphoserine. Basic and acidic residues predominate over residues 212 to 221; sequence NEIKPDREET. A compositionally biased stretch (low complexity) spans 223–236; that stretch reads ENPSSSASESNTST. Residues 272–432 are required for dimerization; the sequence is NSNLIPKVLI…QNNVQKSQVP (161 aa). A required for interaction with NFYA region spans residues 272–564; that stretch reads NSNLIPKVLI…VQPKQSWNPF (293 aa). The homeobox 1 DNA-binding region spans 284–346; that stretch reads NSIPTYNAAL…LKHGVSWTPE (63 aa). A disordered region spans residues 431–454; that stretch reads VPAAQPTAETKPATAAVPTSQSVK. Glycyl lysine isopeptide (Lys-Gly) (interchain with G-Cter in SUMO2) cross-links involve residues lysine 441, lysine 454, and lysine 485. Residues 464–526 constitute a DNA-binding region (homeobox 2); it reads SFGIRAKKTK…YNQRNSKSNQ (63 aa). 3 disordered regions span residues 544 to 563, 626 to 668, and 732 to 769; these read DETT…SWNP, KEEK…CKKT, and SSMN…INNW. Over residues 550 to 562 the composition is skewed to polar residues; sequence PTVGTVQPKQSWN. Positions 569 to 630 form a DNA-binding region, homeobox 3; it reads PQKFKEKTAE…KSKALKEEKM (62 aa). Residue lysine 629 forms a Glycyl lysine isopeptide (Lys-Gly) (interchain with G-Cter in SUMO2) linkage. Position 648 is a phosphoserine (serine 648). Positions 660–722 form a DNA-binding region, homeobox 4; it reads STGKICKKTP…YAWKNGNLKW (63 aa). The interval 734 to 768 is required for nuclear localization; the sequence is MNGLSSLRKRGRGRPKGRGRGRPRGRPRGSKRINN. A compositionally biased stretch (basic residues) spans 740–764; it reads LRKRGRGRPKGRGRGRPRGRPRGSK. Serine 774 bears the Phosphoserine mark. Positions 777–832 form a DNA-binding region, homeobox 5; the sequence is KFKTGTAILKDYYLKHKFLNEQDLDELVNKSHMGYEQVREWFAERQRRSELGIELF. Positions 829–873 are disordered; the sequence is IELFEENEEEDEVIDDQEEDEEETDDSDTWEPPRHVKRKLSKSDD. The segment covering 831–857 has biased composition (acidic residues); the sequence is LFEENEEEDEVIDDQEEDEEETDDSDT. The interval 831–873 is required for repressor activity; the sequence is LFEENEEEDEVIDDQEEDEEETDDSDTWEPPRHVKRKLSKSDD. Over residues 863-873 the composition is skewed to basic residues; sequence HVKRKLSKSDD.

This sequence belongs to the ZHX family. In terms of assembly, forms homodimers. Heterodimer (via HD1 domain) with ZHX2 (via HD1 domain). Also forms a heterodimer with ZHX3 which is a prerequisite for repressor activity. Interacts with ATF7IP and NFYA. Interacts (via homeobox domains) with DNMT3B (via PWWP domain).

The protein resides in the nucleus. In terms of biological role, acts as a transcriptional repressor. Increases DNMT3B-mediated repressive transcriptional activity when DNMT3B is tethered to DNA. May link molecule between DNMT3B and other co-repressor proteins. The protein is Zinc fingers and homeoboxes protein 1 (ZHX1) of Pongo pygmaeus (Bornean orangutan).